A 620-amino-acid chain; its full sequence is Bicaudal D-related protein homolog (620 aa).

Residues 23 to 41 (NNNNNSIVGGSSSSSSGGN) are compositionally biased toward low complexity. The segment at 23–53 (NNNNNSIVGGSSSSSSGGNKSKRPRQFGQYS) is disordered. Coiled coils occupy residues 120-331 (AAEL…LSER) and 461-575 (VLEQ…LIDE). Basic and acidic residues-rich tracts occupy residues 493–503 (KEERDQARGDL) and 509–528 (RDEL…DRRT). Residues 493–528 (KEERDQARGDLEDNTDRDELLSKAQTERDAANDRRT) are disordered.

The protein belongs to the BICDR family. May homodimerize but does not interact with BicD. May interact with eEF1gamma; The interaction is probably indirect.

Functionally, functions redundantly with BicD. Involved in formation and/or development of mechanosensory organs during metamorphosis. During macrochaetae development, together with BicD, involved in Rab 6 and Spn-F stability and distribution and actin cytoskeleton organization. This Drosophila melanogaster (Fruit fly) protein is Bicaudal D-related protein homolog.